The chain runs to 81 residues: Adenoregulin-related peptide (81 aa).

The first 22 residues, 1–22 (MAFLKKSLLLVLFLGLVSLSIC), serve as a signal peptide directing secretion. Residues 23-43 (EEEKRENEDEEEQEDDEQSEM) constitute a propeptide that is removed on maturation. Positions 24–46 (EEKRENEDEEEQEDDEQSEMKRG) are disordered. The segment covering 30–40 (EDEEEQEDDEQ) has biased composition (acidic residues). Isoleucine amide is present on Ile78. The propeptide occupies 79-81 (GEQ).

Expressed by the skin glands.

The protein resides in the secreted. In terms of biological role, has antibacterial activity against Gram-positive bacterium M.luteus NCT C2665 and against Gram-negative bacterium E.coli K12D31. The polypeptide is Adenoregulin-related peptide (Agalychnis callidryas (Red-eyed tree frog)).